The following is a 338-amino-acid chain: Tagatose 1,6-diphosphate aldolase (338 aa).

Belongs to the aldolase LacD family.

It carries out the reaction D-tagatofuranose 1,6-bisphosphate = D-glyceraldehyde 3-phosphate + dihydroxyacetone phosphate. It participates in carbohydrate metabolism; D-tagatose 6-phosphate degradation; D-glyceraldehyde 3-phosphate and glycerone phosphate from D-tagatose 6-phosphate: step 2/2. This Listeria monocytogenes serotype 4b (strain CLIP80459) protein is Tagatose 1,6-diphosphate aldolase.